The primary structure comprises 392 residues: GTPase Obg (392 aa).

Residues 1–159 (MKFVDEATIL…RDLQLELMLL (159 aa)) enclose the Obg domain. Positions 127–148 (NSRFKSSVNRSPRQKTMGTPGD) are disordered. Residues 129 to 143 (RFKSSVNRSPRQKTM) are compositionally biased toward polar residues. Residues 160–333 (ADVGMLGMPN…LCWDVMAFII (174 aa)) form the OBG-type G domain. GTP-binding positions include 166–173 (GMPNAGKS), 191–195 (FTTLV), 213–216 (DIPG), 283–286 (NKID), and 314–316 (SAA). Mg(2+) contacts are provided by Ser173 and Thr193. A compositionally biased stretch (acidic residues) spans 363 to 386 (EQEVEVEDDEEWDEDWDEDDEEGV). A disordered region spans residues 363-392 (EQEVEVEDDEEWDEDWDEDDEEGVEFIYKR).

Belongs to the TRAFAC class OBG-HflX-like GTPase superfamily. OBG GTPase family. As to quaternary structure, monomer. The cofactor is Mg(2+).

The protein localises to the cytoplasm. Its function is as follows. An essential GTPase which binds GTP, GDP and possibly (p)ppGpp with moderate affinity, with high nucleotide exchange rates and a fairly low GTP hydrolysis rate. Plays a role in control of the cell cycle, stress response, ribosome biogenesis and in those bacteria that undergo differentiation, in morphogenesis control. The polypeptide is GTPase Obg (Enterobacter sp. (strain 638)).